The sequence spans 578 residues: Laccase-10 (578 aa).

A signal peptide spans 1-29 (MGARCLALLLLYGTLLLLLLLPQLPLAGA). 2 consecutive Plastocyanin-like domains span residues 37-153 (NVKL…PKAG) and 163-319 (KDVP…YAPP). Asn42 and Asn83 each carry an N-linked (GlcNAc...) asparagine glycan. Residues His87 and His89 each contribute to the Cu cation site. An N-linked (GlcNAc...) asparagine glycan is attached at Asn119. Residues His132 and His134 each coordinate Cu cation. Residues Asn192, Asn208, Asn244, Asn307, Asn336, Asn384, Asn392, Asn402, Asn438, Asn445, Asn448, Asn451, and Asn461 are each glycosylated (N-linked (GlcNAc...) asparagine). In terms of domain architecture, Plastocyanin-like 3 spans 428–562 (DFPASPLEPF…KMAWVVNDGP (135 aa)). His479, His482, His484, His541, Cys542, His543, and His547 together coordinate Cu cation.

The protein belongs to the multicopper oxidase family. The cofactor is Cu cation.

The protein localises to the secreted. The protein resides in the extracellular space. It localises to the apoplast. It carries out the reaction 4 hydroquinone + O2 = 4 benzosemiquinone + 2 H2O. Its function is as follows. Lignin degradation and detoxification of lignin-derived products. The protein is Laccase-10 (LAC10) of Oryza sativa subsp. japonica (Rice).